We begin with the raw amino-acid sequence, 203 residues long: Twist-related protein 1 (203 aa).

Residues 1 to 18 (MMQDVSSSPVSPADDSLS) show a composition bias toward low complexity. The segment at 1–106 (MMQDVSSSPV…GGGSPQSYEE (106 aa)) is disordered. A compositionally biased stretch (basic residues) spans 34 to 43 (RGGRKRRSSS). Gly residues-rich tracts occupy residues 47-66 (AGGG…GGDE) and 81-100 (GCGG…GGGS). Residues 109–160 (TQRVMANVRERQRTQSLNEAFAALRKIIPTLPSDKLSKIQTLKLAARYIDFL) form the bHLH domain. Residues 162-192 (QVLQSDELDSKMASCSYVAHERLSYAFSVWR) form a sufficient for transactivation activity region.

In terms of assembly, efficient DNA binding requires dimerization with another bHLH protein. Homodimer or heterodimer with E proteins such as TCF3. ID1 binds preferentially to TCF3 but does not interact efficiently with TWIST1 so ID1 levels control the amount of TCF3 available to dimerize with TWIST and thus determine the type of dimer formed.

Its subcellular location is the nucleus. Acts as a transcriptional regulator. Inhibits myogenesis by sequestrating E proteins, inhibiting trans-activation by MEF2, and inhibiting DNA-binding by MYOD1 through physical interaction. This interaction probably involves the basic domains of both proteins. Also represses expression of pro-inflammatory cytokines such as TNFA and IL1B. Regulates cranial suture patterning and fusion. Activates transcription as a heterodimer with E proteins. Regulates gene expression differentially, depending on dimer composition. Homodimers induce expression of FGFR2 and POSTN while heterodimers repress FGFR2 and POSTN expression and induce THBS1 expression. Heterodimerization is also required for osteoblast differentiation. Represses the activity of the circadian transcriptional activator: NPAS2-BMAL1 heterodimer. The sequence is that of Twist-related protein 1 (TWIST1) from Pongo pygmaeus (Bornean orangutan).